Reading from the N-terminus, the 717-residue chain is Probable metal-nicotianamine transporter YSL12 (717 aa).

A disordered region spans residues Met-1–Val-56. Transmembrane regions (helical) follow at residues Ala-76–Leu-96, Gly-99–Trp-119, Cys-144–Met-164, Ile-186–Pro-206, Leu-248–Gly-268, Ile-306–Ile-326, Val-351–Ile-371, Val-422–Phe-442, Ile-450–Leu-470, Leu-482–Leu-502, Phe-536–Leu-556, Leu-593–Leu-613, Phe-636–Trp-656, and Val-671–Leu-691.

It belongs to the YSL (TC 2.A.67.2) family. Expressed in root cortex and stele.

It is found in the membrane. In terms of biological role, may be involved in the transport of nicotianamine-chelated metals. This chain is Probable metal-nicotianamine transporter YSL12 (YSL12), found in Oryza sativa subsp. japonica (Rice).